Reading from the N-terminus, the 437-residue chain is Adenylosuccinate lyase (437 aa).

N(6)-(1,2-dicarboxyethyl)-AMP-binding positions include 4-5 (RY), 70-72 (KHD), and 96-97 (TS). His144 acts as the Proton donor/acceptor in catalysis. N(6)-(1,2-dicarboxyethyl)-AMP is bound at residue Gln215. Catalysis depends on Ser265, which acts as the Proton donor/acceptor. Residues Ser266, 271 to 273 (KKN), and 310 to 314 (SVERV) each bind N(6)-(1,2-dicarboxyethyl)-AMP.

This sequence belongs to the lyase 1 family. Adenylosuccinate lyase subfamily. As to quaternary structure, homooligomer. Residues from neighboring subunits contribute catalytic and substrate-binding residues to each active site.

It carries out the reaction N(6)-(1,2-dicarboxyethyl)-AMP = fumarate + AMP. The enzyme catalyses (2S)-2-[5-amino-1-(5-phospho-beta-D-ribosyl)imidazole-4-carboxamido]succinate = 5-amino-1-(5-phospho-beta-D-ribosyl)imidazole-4-carboxamide + fumarate. The protein operates within purine metabolism; AMP biosynthesis via de novo pathway; AMP from IMP: step 2/2. It participates in purine metabolism; IMP biosynthesis via de novo pathway; 5-amino-1-(5-phospho-D-ribosyl)imidazole-4-carboxamide from 5-amino-1-(5-phospho-D-ribosyl)imidazole-4-carboxylate: step 2/2. Functionally, catalyzes two reactions in de novo purine nucleotide biosynthesis. Catalyzes the breakdown of 5-aminoimidazole- (N-succinylocarboxamide) ribotide (SAICAR or 2-[5-amino-1-(5-phospho-beta-D-ribosyl)imidazole-4-carboxamido]succinate) to 5-aminoimidazole-4-carboxamide ribotide (AICAR or 5-amino-1-(5-phospho-beta-D-ribosyl)imidazole-4-carboxamide) and fumarate, and of adenylosuccinate (ADS or N(6)-(1,2-dicarboxyethyl)-AMP) to adenosine monophosphate (AMP) and fumarate. This chain is Adenylosuccinate lyase (purB), found in Aquifex aeolicus (strain VF5).